Reading from the N-terminus, the 79-residue chain is Defensin-like protein 3 (79 aa).

An N-terminal signal peptide occupies residues 1 to 29 (MAKFASIVALLFAALVVFAAFEAPTVVEA). Disulfide bonds link Cys-32–Cys-79, Cys-43–Cys-64, Cys-49–Cys-73, and Cys-53–Cys-75.

Belongs to the DEFL family.

It is found in the secreted. Functionally, possesses antifungal activity sensitive to inorganic cations. The protein is Defensin-like protein 3 (AFP3) of Raphanus sativus (Radish).